The sequence spans 249 residues: Eukaryotic translation initiation factor 6 (249 aa).

Belongs to the eIF-6 family. As to quaternary structure, monomer. Associates with the 60S ribosomal subunit.

The protein resides in the cytoplasm. It is found in the nucleus. Its subcellular location is the nucleolus. Binds to the 60S ribosomal subunit and prevents its association with the 40S ribosomal subunit to form the 80S initiation complex in the cytoplasm. May also be involved in ribosome biogenesis. This is Eukaryotic translation initiation factor 6 from Babesia bovis.